The chain runs to 2286 residues: DNA polymerase epsilon catalytic subunit A (2286 aa).

A disordered region spans residues Met-1 to Ser-30. The segment covering Arg-9–Gly-24 has biased composition (basic and acidic residues). Residues Ser-1184, Ser-1297, Ser-1317, and Ser-1940 each carry the phosphoserine modification. The disordered stretch occupies residues Asp-1939–Glu-1969. Positions Ala-1946 to Glu-1969 are enriched in acidic residues. Zn(2+)-binding residues include Cys-2158, Cys-2161, Cys-2187, and Cys-2190. The CysA-type zinc finger occupies Cys-2158 to Cys-2190. The [4Fe-4S] cluster site is built by Cys-2221, Cys-2224, Cys-2236, and Cys-2238. The CysB motif motif lies at Cys-2221–Cys-2238.

This sequence belongs to the DNA polymerase type-B family. In terms of assembly, component of the DNA polymerase epsilon complex consisting of four subunits: the catalytic subunit POLE and the accessory subunits POLE2, POLE3 and POLE4. Interacts with RAD17 and TOPBP1.

Its subcellular location is the nucleus. The enzyme catalyses DNA(n) + a 2'-deoxyribonucleoside 5'-triphosphate = DNA(n+1) + diphosphate. In terms of biological role, catalytic component of the DNA polymerase epsilon complex. Participates in chromosomal DNA replication. Required during synthesis of the leading DNA strands at the replication fork, binds at/or near replication origins and moves along DNA with the replication fork. Has 3'-5' proofreading exonuclease activity that corrects errors arising during DNA replication. Involved in DNA synthesis during DNA repair. Along with DNA polymerase POLD1 and DNA polymerase POLK, has a role in excision repair (NER) synthesis following UV irradiation. This chain is DNA polymerase epsilon catalytic subunit A, found in Homo sapiens (Human).